The primary structure comprises 500 residues: Cytochrome P450 71B38 (500 aa).

Residues 3-23 (IFLCFLLLLPLSLILFKKLLP) form a helical membrane-spanning segment. Cys-441 is a heme binding site.

The protein belongs to the cytochrome P450 family. The cofactor is heme.

It is found in the membrane. The chain is Cytochrome P450 71B38 (CYP71B38) from Arabidopsis thaliana (Mouse-ear cress).